A 361-amino-acid polypeptide reads, in one-letter code: Phospho-N-acetylmuramoyl-pentapeptide-transferase (361 aa).

Helical transmembrane passes span 21–41 (YITF…FVIG), 72–92 (TPTM…LLWV), 94–114 (LANV…LIGF), 135–155 (LAWT…VTPH), 169–189 (LLVN…VGAS), 200–220 (GLAI…AYLS), 240–260 (LAVF…FNAP), 263–283 (MVFM…AVSV), 289–309 (LVLA…MVQV), and 338–358 (TVVI…LSTL).

The protein belongs to the glycosyltransferase 4 family. MraY subfamily. The cofactor is Mg(2+).

The protein localises to the cell inner membrane. The enzyme catalyses UDP-N-acetyl-alpha-D-muramoyl-L-alanyl-gamma-D-glutamyl-meso-2,6-diaminopimeloyl-D-alanyl-D-alanine + di-trans,octa-cis-undecaprenyl phosphate = di-trans,octa-cis-undecaprenyl diphospho-N-acetyl-alpha-D-muramoyl-L-alanyl-D-glutamyl-meso-2,6-diaminopimeloyl-D-alanyl-D-alanine + UMP. The protein operates within cell wall biogenesis; peptidoglycan biosynthesis. Functionally, catalyzes the initial step of the lipid cycle reactions in the biosynthesis of the cell wall peptidoglycan: transfers peptidoglycan precursor phospho-MurNAc-pentapeptide from UDP-MurNAc-pentapeptide onto the lipid carrier undecaprenyl phosphate, yielding undecaprenyl-pyrophosphoryl-MurNAc-pentapeptide, known as lipid I. In Rhodospirillum centenum (strain ATCC 51521 / SW), this protein is Phospho-N-acetylmuramoyl-pentapeptide-transferase.